The primary structure comprises 254 residues: Probable transcriptional regulatory protein MAE_13580 (254 aa).

Belongs to the TACO1 family.

It localises to the cytoplasm. In Microcystis aeruginosa (strain NIES-843 / IAM M-2473), this protein is Probable transcriptional regulatory protein MAE_13580.